A 156-amino-acid polypeptide reads, in one-letter code: Ecotin (156 aa).

The signal sequence occupies residues 1 to 19 (MKALLIAAGVAALSSTAMA). Cys65 and Cys102 are oxidised to a cystine.

It belongs to the protease inhibitor I11 (ecotin) family. As to quaternary structure, homodimer.

It is found in the periplasm. Functionally, general inhibitor of family S1 serine proteases. This chain is Ecotin, found in Pseudomonas aeruginosa (strain LESB58).